Here is a 589-residue protein sequence, read N- to C-terminus: Arginine--tRNA ligase (589 aa).

The 'HIGH' region motif lies at 123-133; sequence ANVAKPMHVGH.

This sequence belongs to the class-I aminoacyl-tRNA synthetase family. Monomer.

The protein localises to the cytoplasm. It carries out the reaction tRNA(Arg) + L-arginine + ATP = L-arginyl-tRNA(Arg) + AMP + diphosphate. This Hyphomonas neptunium (strain ATCC 15444) protein is Arginine--tRNA ligase.